We begin with the raw amino-acid sequence, 343 residues long: Farnesyl pyrophosphate synthase (343 aa).

Isopentenyl diphosphate contacts are provided by Lys-49, Arg-52, and Gln-87. Residues Asp-94 and Asp-98 each contribute to the Mg(2+) site. Residue Arg-103 participates in dimethylallyl diphosphate binding. An isopentenyl diphosphate-binding site is contributed by Arg-104. Dimethylallyl diphosphate is bound by residues Lys-191, Thr-192, Gln-230, Lys-247, and Lys-256.

This sequence belongs to the FPP/GGPP synthase family. The cofactor is Mg(2+). In terms of tissue distribution, expressed both in apical and sub-apical cells of glandular secretory trichomes.

It localises to the cytoplasm. The protein localises to the nucleus. It carries out the reaction isopentenyl diphosphate + dimethylallyl diphosphate = (2E)-geranyl diphosphate + diphosphate. The enzyme catalyses isopentenyl diphosphate + (2E)-geranyl diphosphate = (2E,6E)-farnesyl diphosphate + diphosphate. It participates in isoprenoid biosynthesis; farnesyl diphosphate biosynthesis; farnesyl diphosphate from geranyl diphosphate and isopentenyl diphosphate: step 1/1. Its pathway is sesquiterpene biosynthesis. The protein operates within isoprenoid biosynthesis; geranyl diphosphate biosynthesis; geranyl diphosphate from dimethylallyl diphosphate and isopentenyl diphosphate: step 1/1. Involved in the biosynthesis of the antimalarial endoperoxide artemisinin. Catalyzes the sequential condensation of isopentenyl pyrophosphate with the allylic pyrophosphates, dimethylallyl pyrophosphate, and then with the resultant geranylpyrophosphate to the ultimate product farnesyl pyrophosphate. Promotes anti-malarial and antimicrobial (toward Gram-positive bacteria B.subtilis and S.aureus) activities of plant crude extract probably by triggering artemisinin levels. The polypeptide is Farnesyl pyrophosphate synthase (Artemisia annua (Sweet wormwood)).